The sequence spans 462 residues: Notoamide biosynthesis cluster protein O' (462 aa).

3 consecutive transmembrane segments (helical) span residues 16 to 36, 55 to 75, and 79 to 99; these read IFNV…WAAM, AVIF…IAKI, and WAFA…YCNV. Residue N102 is glycosylated (N-linked (GlcNAc...) asparagine). The next 4 helical transmembrane spans lie at 104–124, 143–163, 173–193, and 233–253; these read SWYI…FWLT, AYWL…TLGV, ISVQ…FVAA, and ILLL…FSTY. N254 carries N-linked (GlcNAc...) asparagine glycosylation. The next 4 helical transmembrane spans lie at 265–285, 297–317, 343–363, and 404–424; these read LSSL…GFFL, MAAF…AMVV, VYIL…WLIG, and AVAV…FVIY. Residues 443-462 are disordered; the sequence is LQTSGEGSHDIMDANGKSDD. The span at 449 to 462 shows a compositional bias: basic and acidic residues; that stretch reads GSHDIMDANGKSDD.

This sequence belongs to the unc-93 family.

The protein resides in the membrane. Functionally, part of the gene cluster that mediates the biosynthesis of notoamide, a fungal indole alkaloid that belongs to a family of natural products containing a characteristic bicyclo[2.2.2]diazaoctane core. The first step of notoamide biosynthesis involves coupling of L-proline and L-tryptophan by the bimodular NRPS notE', to produce cyclo-L-tryptophan-L-proline called brevianamide F. The reverse prenyltransferase notF' then acts as a deoxybrevianamide E synthase and converts brevianamide F to deoxybrevianamide E via reverse prenylation at C-2 of the indole ring leading to the bicyclo[2.2.2]diazaoctane core. Deoxybrevianamide E is further hydroxylated at C-6 of the indole ring, likely catalyzed by the cytochrome P450 monooxygenase notG', to yield 6-hydroxy-deoxybrevianamide E. 6-hydroxy-deoxybrevianamide E is a specific substrate of the prenyltransferase notC' for normal prenylation at C-7 to produce 6-hydroxy-7-prenyl-deoxybrevianamide, also called notoamide S. As the proposed pivotal branching point in notoamide biosynthesis, notoamide S can be diverted to notoamide E through an oxidative pyran ring closure putatively catalyzed by either notH' cytochrome P450 monooxygenase or the notD' FAD-linked oxidoreductase. This step would be followed by an indole 2,3-epoxidation-initiated pinacol-like rearrangement catalyzed by the notB' FAD-dependent monooxygenase leading to the formation of notoamide C and notoamide D. On the other hand notoamide S is converted to notoamide T by notH' (or notD'), a bifunctional oxidase that also functions as the intramolecular Diels-Alderase responsible for generation of (-)-notoamide T. To generate antipodal (+)-notoaminide T, notH (or notD) in Aspergillus strain MF297-2 is expected to catalyze a Diels-Alder reaction leading to the opposite stereochemistry. The remaining oxidoreductase notD' (or notH') likely catalyzes the oxidative pyran ring formation to yield (-)-stephacidin A. The FAD-dependent monooxygenase notI' is highly similar to notB' and is predicted to catalyze a similar conversion from (-)-stephacidin A to (+)-notoamide B via the 2,3-epoxidation of (-)-stephacidin A followed by a pinacol-type rearrangement. Finally, it remains unclear which enzyme could be responsible for the final hydroxylation steps leading to notoamide A and sclerotiamide. The function of notO' in the notoamide biosynthesis has not been determined yet. The polypeptide is Notoamide biosynthesis cluster protein O' (Aspergillus versicolor).